We begin with the raw amino-acid sequence, 399 residues long: Integral membrane protein GPR137B (399 aa).

Residues 1-22 are disordered; it reads MRPERPRPRGSAPGPMETPPWD. The Lumenal portion of the chain corresponds to 1–46; it reads MRPERPRPRGSAPGPMETPPWDPARNDSLPPTLTPAVPPYVKLGLT. Asn26 carries an N-linked (GlcNAc...) asparagine glycan. Residues 47–67 form a helical membrane-spanning segment; that stretch reads VVYTVFYALLFVFIYVQLWLV. Residues 68–79 are Cytoplasmic-facing; sequence LRYRHKRLSYQS. The helical transmembrane segment at 80 to 100 threads the bilayer; it reads VFLFLCLFWASLRTVLFSFYF. At 101–111 the chain is on the lumenal side; sequence KDFVAANSLSP. Residues 112-132 traverse the membrane as a helical segment; sequence FVFWLLYCFPVCLQFFTLTLM. Residues 133 to 159 lie on the Cytoplasmic side of the membrane; that stretch reads NLYFTQVIFKAKSKYSPELLKYRLPLY. The helical transmembrane segment at 160–180 threads the bilayer; it reads LASLFISLVFLLVNLTCAVLV. The Lumenal portion of the chain corresponds to 181-188; sequence KTGNWERK. Residues 189 to 209 traverse the membrane as a helical segment; sequence VIVSVRVAINDTLFVLCAVSL. Residues 210 to 237 lie on the Cytoplasmic side of the membrane; the sequence is SICLYKISKMSLANIYLESKGSSVCQVT. The helical transmembrane segment at 238–258 threads the bilayer; the sequence is AIGVTVILLYTSRACYNLFIL. Residues 259-292 lie on the Lumenal side of the membrane; it reads SFSQNKSVHSFDYDWYNVSDQADLKNQLGDAGYV. N-linked (GlcNAc...) asparagine glycosylation is found at Asn263 and Asn275. The chain crosses the membrane as a helical span at residues 293-313; the sequence is LFGVVLFVWELLPTTLVVYFF. Residues 314-399 are Cytoplasmic-facing; the sequence is RVRNPTKDLT…TLDPDKPSLG (86 aa).

The protein belongs to the GPR137 family. In terms of assembly, interaction with RRAGA; increases RRAGA recruitment to lysosomes. Interacts with MTOR; this interaction is amino acid sensitive. Expressed in kidney, heart, brain and placenta.

The protein resides in the lysosome membrane. In terms of biological role, lysosomal integral membrane protein that regulates the localization and activity of mTORC1, a signaling complex promoting cell growth in response to growth factors, energy levels, and amino acids. Interacts with Rag GTPases and increases the lysosomial localization and activity of Rag GTPases and thereby regulates mTORC1 translocation and activity in lysosome. Involved in the regulation of lysosomal morphology and autophagy. Its function is as follows. Also acts as a negative regulator of osteoclast activity. Involved in interleukin-4-induced M2 macrophage polarization. The sequence is that of Integral membrane protein GPR137B (GPR137B) from Homo sapiens (Human).